Consider the following 87-residue polypeptide: MNEALINDLRLAGYEVNTNGIGLTQIEGNGFILEYEFSQWWLYANYGELIEYVDQFDSLDAALGAANLMKCLKLIHPLCFKIGLQIL.

This is an uncharacterized protein from Escherichia coli (Bacteriophage T4).